The primary structure comprises 192 residues: dTTP/UTP pyrophosphatase (192 aa).

The active-site Proton acceptor is aspartate 72.

It belongs to the Maf family. YhdE subfamily. It depends on a divalent metal cation as a cofactor.

It is found in the cytoplasm. The enzyme catalyses dTTP + H2O = dTMP + diphosphate + H(+). It carries out the reaction UTP + H2O = UMP + diphosphate + H(+). In terms of biological role, nucleoside triphosphate pyrophosphatase that hydrolyzes dTTP and UTP. May have a dual role in cell division arrest and in preventing the incorporation of modified nucleotides into cellular nucleic acids. This Geobacter metallireducens (strain ATCC 53774 / DSM 7210 / GS-15) protein is dTTP/UTP pyrophosphatase.